We begin with the raw amino-acid sequence, 204 residues long: Ras-related protein Rab-1D (204 aa).

GTP is bound by residues 17-25 (GDSGVGKSC), 35-42 (WTDTHIST), 65-69 (DTAGQ), 123-126 (NKTD), and 153-155 (SAK). The Effector region motif lies at 39-47 (HISTIGVDF). Positions 182 to 191 (PKPDEVDIKS) are enriched in basic and acidic residues. Residues 182–204 (PKPDEVDIKSKNKTKSGGKKSFC) are disordered. The segment covering 192-204 (KNKTKSGGKKSFC) has biased composition (basic residues). A lipid anchor (S-geranylgeranyl cysteine) is attached at cysteine 204.

It belongs to the small GTPase superfamily. Rab family.

The protein localises to the cell membrane. This is Ras-related protein Rab-1D (rab1D) from Dictyostelium discoideum (Social amoeba).